The following is a 1545-amino-acid chain: Tricalbin-3 (1545 aa).

Residues 1–89 (MTGIKAQVHP…SNPEGKKQSS (89 aa)) are disordered. Topologically, residues 1–206 (MTGIKAQVHP…AYILENFYND (206 aa)) are cytoplasmic. Residues 62–80 (TKTSNSVSDVSKGQKTADS) are compositionally biased toward polar residues. Phosphoserine is present on residues Ser67 and Ser112. Residues 207–227 (WYCNIATVLGTCFFSWLFAYI) traverse the membrane as a helical segment. Gly228 is a topological domain (extracellular). A helical transmembrane segment spans residues 229–249 (FSWWSMIFIFLGTATVYNAEY). Residues 250–1545 (TRFNRNIRDD…VPEVPQEYTQ (1296 aa)) are Cytoplasmic-facing. The SMP-LTD domain occupies 272–479 (RVESTTWLNS…PPNHLDINVE (208 aa)). The region spanning 470–596 (PPNHLDINVE…LQNPVLDNQT (127 aa)) is the C2 1 domain. Residues 620–660 (EDKSEEKAVERAEAKAKGKKEDENEDTTEKEEDENEESSQT) are a coiled coil. Over residues 624-641 (EEKAVERAEAKAKGKKED) the composition is skewed to basic and acidic residues. The disordered stretch occupies residues 624–660 (EEKAVERAEAKAKGKKEDENEDTTEKEEDENEESSQT). Residues 642 to 658 (ENEDTTEKEEDENEESS) show a composition bias toward acidic residues. 2 C2 domains span residues 646–763 (TTEK…AQEF) and 783–897 (MTGA…SGKY). Residues 937 to 972 (SPEELVNVEKLEKELKEKKKKFEATQEENEQEMEKN) adopt a coiled-coil conformation. The C2 4 domain maps to 1119–1234 (PTSVKLPSSE…EVGKTYNWNL (116 aa)). The Ca(2+) site is built by Asp1150, Asp1156, Asp1204, Asp1206, and Asp1212. The interval 1304 to 1404 (LLKSLGGNPM…NSRGHSRASS (101 aa)) is disordered. Residues 1318-1328 (SSNGNESNGAK) show a composition bias toward polar residues. The segment covering 1329 to 1340 (KSSEKKSFDRRS) has biased composition (basic and acidic residues). Phosphoserine is present on residues Ser1340, Ser1342, and Ser1346. The segment covering 1341–1351 (PSNLNSTSVTP) has biased composition (polar residues). Thr1350 is modified (phosphothreonine). Ser1354 carries the post-translational modification Phosphoserine. Polar residues predominate over residues 1361–1373 (VPNTSYAPVQSAS). Over residues 1377-1404 (KPTDNTSSSSNKKDTPSSNSRGHSRASS) the composition is skewed to low complexity. A C2 5 domain is found at 1396 to 1514 (SRGHSRASSF…QQDGQISVKL (119 aa)). The residue at position 1400 (Ser1400) is a Phosphoserine.

This sequence belongs to the tricalbin family. As to quaternary structure, interacts with TCB2 via its C-terminal domain. It depends on Ca(2+) as a cofactor.

It localises to the cell membrane. The protein resides in the endoplasmic reticulum membrane. Functionally, may play a role in membrane trafficking. This Saccharomyces cerevisiae (strain ATCC 204508 / S288c) (Baker's yeast) protein is Tricalbin-3 (TCB3).